A 393-amino-acid polypeptide reads, in one-letter code: NAD(P)H-quinone oxidoreductase subunit H, chloroplastic (393 aa).

It belongs to the complex I 49 kDa subunit family. NDH is composed of at least 16 different subunits, 5 of which are encoded in the nucleus.

The protein resides in the plastid. It is found in the chloroplast thylakoid membrane. It carries out the reaction a plastoquinone + NADH + (n+1) H(+)(in) = a plastoquinol + NAD(+) + n H(+)(out). The catalysed reaction is a plastoquinone + NADPH + (n+1) H(+)(in) = a plastoquinol + NADP(+) + n H(+)(out). Its function is as follows. NDH shuttles electrons from NAD(P)H:plastoquinone, via FMN and iron-sulfur (Fe-S) centers, to quinones in the photosynthetic chain and possibly in a chloroplast respiratory chain. The immediate electron acceptor for the enzyme in this species is believed to be plastoquinone. Couples the redox reaction to proton translocation, and thus conserves the redox energy in a proton gradient. The protein is NAD(P)H-quinone oxidoreductase subunit H, chloroplastic of Ceratophyllum demersum (Rigid hornwort).